The chain runs to 372 residues: N-methyl-L-tryptophan oxidase (372 aa).

Position 4–34 (4–34 (DLIIIGSGSVGAAAGYYATRAGLKVLMTDAH)) interacts with FAD. C307 is modified (S-8alpha-FAD cysteine).

The protein belongs to the MSOX/MTOX family. MTOX subfamily. In terms of assembly, monomer. The cofactor is FAD.

It carries out the reaction N(alpha)-methyl-L-tryptophan + O2 + H2O = L-tryptophan + formaldehyde + H2O2. Its function is as follows. Catalyzes the oxidative demethylation of N-methyl-L-tryptophan. This is N-methyl-L-tryptophan oxidase from Salmonella dublin (strain CT_02021853).